A 273-amino-acid chain; its full sequence is Sanguinarine reductase (273 aa).

The active-site Proton donor is serine 153. Substrate-binding positions include 157–161 (CDPDH) and lysine 175.

Belongs to the NAD(P)-dependent epimerase/dehydratase family. As to quaternary structure, monomer.

It catalyses the reaction dihydrosanguinarine + NADP(+) = sanguinarine + NADPH. It carries out the reaction dihydrosanguinarine + NAD(+) = sanguinarine + NADH. The catalysed reaction is dihydrochelirubine + NAD(+) = chelirubine + NADH. The enzyme catalyses dihydrochelirubine + NADP(+) = chelirubine + NADPH. Inhibited by iodoacetamide and irreversibly by its product, dihydrosanguinarine. In terms of biological role, catalyzes the reduction of benzophenanthridines, preferentially sanguinarine, to the corresponding dihydroalkaloids. Involved in detoxifying the phytoalexins produced by plant itself. The sanguinarine produced by intact cells upon elicitation, after excretion and binding to cell wall elements, is rapidly reabsorbed and reduced to the less toxic dihydrosanguinarine. Can work with both NAD(P) or NAD as a hydrogen donor, but at low concentrations, the reaction velocity with NAD(P)H is threefold higher than with NADH. However, chelerythrine shows maximum conversion rates with NADH. The substrate preference is sanguinarine &gt; chelerythrine &gt; chelirubine, macarpine or 10-OH-chelerythrine. No activity with berberine or phenanthridine cations. The protein is Sanguinarine reductase of Eschscholzia californica (California poppy).